The following is a 321-amino-acid chain: MDRGRCANMLKSLQRTLAKCQKSPSTNHWQCFKRNFTSIRATKYPGRSNSTFHYWPWFAASTLLATSLYYRDRPVQNDDKTDAFPSHTESIQVDSSVSDFPLTITALNFPVSTTFKLLGYGQRHVTFLRFKVYALGLYLAENDENLVSDTLNETYLHKYFLDVDDSKTPKENLARLLKRDDSKSVMMIDDLLDSGMRMLAKITPVRNTDFKHLKEGLVKTISKHPDVANNKDTLAKGLSELNDAFSRKGSVRKNDDLIIELLANGALQFSYHDSKNNEFEVMGVVNNQLVGKFLFSQYLCGEKSPSPQAKKTTIDKLITLL.

Residues 1–72 constitute a mitochondrion transit peptide; sequence MDRGRCANML…LLATSLYYRD (72 aa).

This sequence belongs to the AIM18/AIM46 family.

The protein localises to the mitochondrion. The protein is Altered inheritance of mitochondria protein 18, mitochondrial (AIM18) of Saccharomyces cerevisiae (strain AWRI1631) (Baker's yeast).